The sequence spans 104 residues: SPbeta prophage-derived stress response protein SCP1 (104 aa).

The protein localises to the cytoplasm. This is SPbeta prophage-derived stress response protein SCP1 (yorD) from Bacillus subtilis (strain 168).